A 398-amino-acid polypeptide reads, in one-letter code: Isopenicillin N epimerase (398 aa).

Lys-219 carries the N6-(pyridoxal phosphate)lysine modification. The interval 243 to 264 (PQVSWGYRPDGENPSDERNRFG) is disordered. Residues 251-264 (PDGENPSDERNRFG) are compositionally biased toward basic and acidic residues.

Belongs to the class-V pyridoxal-phosphate-dependent aminotransferase family. Requires pyridoxal 5'-phosphate as cofactor.

The enzyme catalyses isopenicillin N = penicillin N. It participates in antibiotic biosynthesis; cephalosporin C biosynthesis. Catalyzes the reversible isomerization between isopenicillin N and penicillin N. In Amycolatopsis lactamdurans (Nocardia lactamdurans), this protein is Isopenicillin N epimerase (cefD).